The following is a 296-amino-acid chain: Probable lipid kinase YegS-like (296 aa).

The 130-residue stretch at 1-130 folds into the DAGKc domain; it reads MPHTLLILNG…IDLAQVNGEH (130 aa). Residues T37, 63-69, and T92 each bind ATP; that span reads GDGTINE. Mg(2+) contacts are provided by L212, D215, and L217. E268 acts as the Proton acceptor in catalysis.

The protein belongs to the diacylglycerol/lipid kinase family. YegS lipid kinase subfamily. The cofactor is Mg(2+). Ca(2+) is required as a cofactor.

The protein localises to the cytoplasm. Probably phosphorylates lipids; the in vivo substrate is unknown. The sequence is that of Probable lipid kinase YegS-like from Yersinia pestis bv. Antiqua (strain Angola).